Reading from the N-terminus, the 347-residue chain is Probable zinc transporter 8 (347 aa).

Positions 1–27 (MATTTQHMNQIFLVLLLISFAISPAIS) are cleaved as a signal peptide. Over 28 to 51 (TVPKECETDSTDSCIDKTKALPLK) the chain is Extracellular. The helical transmembrane segment at 52 to 72 (IVAIVAILVTSMIGVAAPLFS) threads the bilayer. Topologically, residues 73 to 83 (RYVTFLHPDGK) are cytoplasmic. The helical transmembrane segment at 84-104 (IFMIIKCFASGIILGTGFMHV) threads the bilayer. Topologically, residues 105–124 (LPDSFEMLSSPCLEDNPWHK) are extracellular. A helical transmembrane segment spans residues 125 to 145 (FPFTGFVAMLSGLVTLAIDSI). At 146-192 (ATSLYTKKAVADDSEERTTPMIIQIDHLPLTTKERSSTCSKQLLRYR) the chain is on the cytoplasmic side. A helical transmembrane segment spans residues 193–213 (VIATVLELGIIVHSVVIGLSL). Over 214–224 (GATNDTCTIKG) the chain is Extracellular. A helical transmembrane segment spans residues 225 to 245 (LIAALCFHQMFEGMGLGGCIL). The Cytoplasmic segment spans residues 246-254 (QAEYTNVKK). A helical transmembrane segment spans residues 255–275 (FVMAFFFAVTTPSGIALGIAL). The Extracellular segment spans residues 276–286 (SSVYKDNSPTA). The helical transmembrane segment at 287 to 307 (LITVGLLNACSAGLLIYMALV) threads the bilayer. Topologically, residues 308–326 (DLLAAEFMGSMLQRSVKLQ) are cytoplasmic. Residues 327 to 347 (LNCFGAALLGCGGMSVLAKWA) form a helical membrane-spanning segment.

It belongs to the ZIP transporter (TC 2.A.5) family.

The protein localises to the cell membrane. Its function is as follows. Probably mediates zinc uptake from the rhizosphere. The protein is Probable zinc transporter 8 (ZIP8) of Arabidopsis thaliana (Mouse-ear cress).